We begin with the raw amino-acid sequence, 802 residues long: ATP-dependent zinc metalloprotease FTSH 7, chloroplastic (802 aa).

Residues 1 to 55 (MTTTFEFLQPRIHGFATCCSSNSLLYSKASRFFNDRCRVYRQNPNRFVSNSITLP) constitute a chloroplast transit peptide. The disordered stretch occupies residues 87–117 (CQEDDQNESSSEEEESSQSTPAKSERKREKK). Residues 88–102 (QEDDQNESSSEEEES) are compositionally biased toward acidic residues. The next 2 helical transmembrane spans lie at 134 to 154 (IIQAQGIGVLLLQLSVVMFVM) and 268 to 288 (GGFFNSALIALFYIAVLAGLI). Position 365 to 372 (365 to 372 (GLPGTGKT)) interacts with ATP. Histidine 590 lines the Zn(2+) pocket. The active site involves glutamate 591. Zn(2+) is bound by residues histidine 594 and aspartate 673.

This sequence in the N-terminal section; belongs to the AAA ATPase family. The protein in the C-terminal section; belongs to the peptidase M41 family. Zn(2+) serves as cofactor.

Its subcellular location is the plastid. It localises to the chloroplast thylakoid membrane. Probable ATP-dependent zinc metallopeptidase. The protein is ATP-dependent zinc metalloprotease FTSH 7, chloroplastic (FTSH7) of Arabidopsis thaliana (Mouse-ear cress).